Reading from the N-terminus, the 1057-residue chain is Carbamoyl phosphate synthase large chain (1057 aa).

Positions methionine 1–glutamate 401 are carboxyphosphate synthetic domain. 12 residues coordinate ATP: arginine 129, arginine 169, glycine 175, glycine 176, lysine 208, isoleucine 210, glutamate 215, glycine 241, isoleucine 242, histidine 243, glutamine 284, and glutamate 298. The 195-residue stretch at arginine 133–valine 327 folds into the ATP-grasp 1 domain. Residues glutamine 284, glutamate 298, and asparagine 300 each coordinate Mg(2+). Residues glutamine 284, glutamate 298, and asparagine 300 each coordinate Mn(2+). The segment at tyrosine 402 to serine 546 is oligomerization domain. The carbamoyl phosphate synthetic domain stretch occupies residues isoleucine 547–glycine 929. The region spanning glutamate 671 to methionine 861 is the ATP-grasp 2 domain. The ATP site is built by arginine 707, arginine 746, leucine 748, glutamate 752, glycine 777, valine 778, histidine 779, serine 780, glutamine 820, and glutamate 832. Positions 820, 832, and 834 each coordinate Mg(2+). The Mn(2+) site is built by glutamine 820, glutamate 832, and asparagine 834. Positions phenylalanine 930–valine 1057 constitute an MGS-like domain. The interval phenylalanine 930 to valine 1057 is allosteric domain.

It belongs to the CarB family. As to quaternary structure, composed of two chains; the small (or glutamine) chain promotes the hydrolysis of glutamine to ammonia, which is used by the large (or ammonia) chain to synthesize carbamoyl phosphate. Tetramer of heterodimers (alpha,beta)4. Requires Mg(2+) as cofactor. Mn(2+) serves as cofactor.

The catalysed reaction is hydrogencarbonate + L-glutamine + 2 ATP + H2O = carbamoyl phosphate + L-glutamate + 2 ADP + phosphate + 2 H(+). It carries out the reaction hydrogencarbonate + NH4(+) + 2 ATP = carbamoyl phosphate + 2 ADP + phosphate + 2 H(+). It functions in the pathway amino-acid biosynthesis; L-arginine biosynthesis; carbamoyl phosphate from bicarbonate: step 1/1. It participates in pyrimidine metabolism; UMP biosynthesis via de novo pathway; (S)-dihydroorotate from bicarbonate: step 1/3. Functionally, large subunit of the glutamine-dependent carbamoyl phosphate synthetase (CPSase). CPSase catalyzes the formation of carbamoyl phosphate from the ammonia moiety of glutamine, carbonate, and phosphate donated by ATP, constituting the first step of 2 biosynthetic pathways, one leading to arginine and/or urea and the other to pyrimidine nucleotides. The large subunit (synthetase) binds the substrates ammonia (free or transferred from glutamine from the small subunit), hydrogencarbonate and ATP and carries out an ATP-coupled ligase reaction, activating hydrogencarbonate by forming carboxy phosphate which reacts with ammonia to form carbamoyl phosphate. This is Carbamoyl phosphate synthase large chain from Staphylococcus epidermidis (strain ATCC 12228 / FDA PCI 1200).